Reading from the N-terminus, the 307-residue chain is tRNA pseudouridine synthase B (307 aa).

The Nucleophile role is filled by D38.

The protein belongs to the pseudouridine synthase TruB family. Type 1 subfamily.

It carries out the reaction uridine(55) in tRNA = pseudouridine(55) in tRNA. Its function is as follows. Responsible for synthesis of pseudouridine from uracil-55 in the psi GC loop of transfer RNAs. The protein is tRNA pseudouridine synthase B of Bacillus anthracis.